We begin with the raw amino-acid sequence, 382 residues long: Mannitol-1-phosphate 5-dehydrogenase (382 aa).

NAD(+) is bound at residue 3–14 (ALHFGAGNIGRG).

This sequence belongs to the mannitol dehydrogenase family.

The enzyme catalyses D-mannitol 1-phosphate + NAD(+) = beta-D-fructose 6-phosphate + NADH + H(+). The protein is Mannitol-1-phosphate 5-dehydrogenase (mtlD) of Klebsiella pneumoniae.